A 382-amino-acid chain; its full sequence is uncharacterized protein (382 aa).

The N-terminal stretch at 1-25 is a signal peptide; it reads MKKWMAAVFVMMLMLCFGGIENVKA. Ser186 functions as the Nucleophile in the catalytic mechanism. Residues Asp354 and His357 contribute to the active site.

It belongs to the 'GDSL' lipolytic enzyme family.

This is an uncharacterized protein from Bacillus subtilis (strain 168).